We begin with the raw amino-acid sequence, 228 residues long: MAYPLQLGLQDASSPIMEELTNFHDHTLMIVFLISSLVLYLISLMLTTKLIHTSTMDAQEVETIWTILPAIILILIALPSLRILYMMDEINNPVLTVKTMGHQWYWSYEYTDYEDLCFDSYMTPTNELKPGELRLLEVDNRVVLPMELPIRMLISSEDVLHSWAVPSLGLKTDAIPGRLNQATVTSNRPGVFYGQCSEICGSNHSFMPIVLEMIPLKLFENWSVSMTQ.

Residues 1–14 are Mitochondrial intermembrane-facing; sequence MAYPLQLGLQDASS. A helical membrane pass occupies residues 15–45; the sequence is PIMEELTNFHDHTLMIVFLISSLVLYLISLM. Residues 46-59 lie on the Mitochondrial matrix side of the membrane; the sequence is LTTKLIHTSTMDAQ. A helical membrane pass occupies residues 60–87; that stretch reads EVETIWTILPAIILILIALPSLRILYMM. The Mitochondrial intermembrane portion of the chain corresponds to 88–228; that stretch reads DEINNPVLTV…FENWSVSMTQ (141 aa). The Cu cation site is built by His161, Cys196, Glu198, Cys200, His204, and Met207. Glu198 provides a ligand contact to Mg(2+).

It belongs to the cytochrome c oxidase subunit 2 family. In terms of assembly, component of the cytochrome c oxidase (complex IV, CIV), a multisubunit enzyme composed of 14 subunits. The complex is composed of a catalytic core of 3 subunits MT-CO1, MT-CO2 and MT-CO3, encoded in the mitochondrial DNA, and 11 supernumerary subunits COX4I, COX5A, COX5B, COX6A, COX6B, COX6C, COX7A, COX7B, COX7C, COX8 and NDUFA4, which are encoded in the nuclear genome. The complex exists as a monomer or a dimer and forms supercomplexes (SCs) in the inner mitochondrial membrane with NADH-ubiquinone oxidoreductase (complex I, CI) and ubiquinol-cytochrome c oxidoreductase (cytochrome b-c1 complex, complex III, CIII), resulting in different assemblies (supercomplex SCI(1)III(2)IV(1) and megacomplex MCI(2)III(2)IV(2)). Found in a complex with TMEM177, COA6, COX18, COX20, SCO1 and SCO2. Interacts with TMEM177 in a COX20-dependent manner. Interacts with COX20. Interacts with COX16. Cu cation is required as a cofactor.

It is found in the mitochondrion inner membrane. It carries out the reaction 4 Fe(II)-[cytochrome c] + O2 + 8 H(+)(in) = 4 Fe(III)-[cytochrome c] + 2 H2O + 4 H(+)(out). Its function is as follows. Component of the cytochrome c oxidase, the last enzyme in the mitochondrial electron transport chain which drives oxidative phosphorylation. The respiratory chain contains 3 multisubunit complexes succinate dehydrogenase (complex II, CII), ubiquinol-cytochrome c oxidoreductase (cytochrome b-c1 complex, complex III, CIII) and cytochrome c oxidase (complex IV, CIV), that cooperate to transfer electrons derived from NADH and succinate to molecular oxygen, creating an electrochemical gradient over the inner membrane that drives transmembrane transport and the ATP synthase. Cytochrome c oxidase is the component of the respiratory chain that catalyzes the reduction of oxygen to water. Electrons originating from reduced cytochrome c in the intermembrane space (IMS) are transferred via the dinuclear copper A center (CU(A)) of subunit 2 and heme A of subunit 1 to the active site in subunit 1, a binuclear center (BNC) formed by heme A3 and copper B (CU(B)). The BNC reduces molecular oxygen to 2 water molecules using 4 electrons from cytochrome c in the IMS and 4 protons from the mitochondrial matrix. The polypeptide is Cytochrome c oxidase subunit 2 (MT-CO2) (Meriones shawi (Shaw's jird)).